Consider the following 1090-residue polypeptide: Aminopeptidase-like protein AC3.5 (1090 aa).

Topologically, residues 1–77 (MEDVDLGKDR…KPKKRIACSP (77 aa)) are cytoplasmic. Positions 21–33 (GNGSASNLNNRNN) are enriched in low complexity. The interval 21–71 (GNGSASNLNNRNNIPLSEKAAKEPLQTQPQEAPPAPKPKVQKQKPPVKPKK) is disordered. The segment covering 59 to 71 (KVQKQKPPVKPKK) has biased composition (basic residues). The helical; Signal-anchor for type II membrane protein transmembrane segment at 78–98 (GSAICLFLLAVAAIIFAAFLG) threads the bilayer. Topologically, residues 99–1090 (HYLTKQNYEM…DEMESSEEQE (992 aa)) are lumenal. 5 N-linked (GlcNAc...) asparagine glycosylation sites follow: N115, N123, N143, N176, and N230. The segment at 217 to 259 (VTKRAKKSVDSGTNSTSEMPEGSGEEAMATTATTTTTESTTPV) is disordered. Positions 241 to 257 (EEAMATTATTTTTESTT) are enriched in low complexity. 8 N-linked (GlcNAc...) asparagine glycosylation sites follow: N402, N710, N723, N789, N894, N919, N964, and N993. Residues 1069–1080 (YLDGKMKGPAKD) show a composition bias toward basic and acidic residues. Positions 1069-1090 (YLDGKMKGPAKDDEMESSEEQE) are disordered. Residues 1081–1090 (DEMESSEEQE) show a composition bias toward acidic residues.

The protein belongs to the peptidase M1 family.

The protein resides in the membrane. The polypeptide is Aminopeptidase-like protein AC3.5 (Caenorhabditis elegans).